The chain runs to 392 residues: Heavy metal-associated isoprenylated plant protein 6 (392 aa).

The span at methionine 1–threonine 19 shows a compositional bias: basic and acidic residues. Residues methionine 1–glycine 22 are disordered. Residues isoleucine 23 to valine 86 form the HMA 1 domain. Residues cysteine 34 and cysteine 37 each contribute to the Cd(2+) site. A disordered region spans residues valine 89–valine 157. The segment covering alanine 106–alanine 145 has biased composition (basic and acidic residues). Positions glutamate 153–valine 216 constitute an HMA 2 domain. Cd(2+)-binding residues include cysteine 164 and cysteine 167. Basic and acidic residues predominate over residues lysine 258–valine 270. Disordered stretches follow at residues lysine 258–glycine 285 and glycine 350–methionine 392. Over residues valine 272 to glycine 285 the composition is skewed to gly residues. Position 389 is a cysteine methyl ester (cysteine 389). Cysteine 389 carries the S-farnesyl cysteine lipid modification. The propeptide at serine 390–methionine 392 is removed in mature form.

This sequence belongs to the HIPP family. In terms of tissue distribution, expressed in petioles, hypocotyls, peduncles, vascular bundles and root meristems.

Its subcellular location is the cell membrane. In terms of biological role, heavy-metal-binding protein. Involved in the maintenance of heavy metal homeostasis and/or in detoxification. The protein is Heavy metal-associated isoprenylated plant protein 6 of Arabidopsis thaliana (Mouse-ear cress).